The chain runs to 170 residues: Urease accessory protein UreE (170 aa).

Belongs to the UreE family.

It is found in the cytoplasm. Involved in urease metallocenter assembly. Binds nickel. Probably functions as a nickel donor during metallocenter assembly. The protein is Urease accessory protein UreE of Helicobacter acinonychis (strain Sheeba).